The primary structure comprises 889 residues: Potassium/sodium hyperpolarization-activated cyclic nucleotide-gated channel 2 (889 aa).

Over residues 1–10 (MDARGGGGRP) the composition is skewed to gly residues. The segment at 1–159 (MDARGGGGRP…GPAGEPRGSQ (159 aa)) is disordered. Over 1–215 (MDARGGGGRP…PYSDFRFYWD (215 aa)) the chain is Cytoplasmic. A compositionally biased stretch (pro residues) spans 17-55 (TPAPGPPPPPPPAPPQQQPPPPPPPAPPPGPGPAPPQHP). A compositionally biased stretch (low complexity) spans 129–155 (GAASGPAPGPGPAEEAGSEEAGPAGEP). Phosphoserine occurs at positions 146 and 161. Residues 158–209 (SQASFMQRQFGALLQPGVNKFSLRMFGSQKAVEREQERVKSAGAWIIHPYSD) are involved in subunit assembly. Residues 216–236 (FTMLLFMVGNLIIIPVGITFF) form a helical membrane-spanning segment. Residues 237–240 (KDET) are Extracellular-facing. A helical membrane pass occupies residues 241 to 261 (TAPWIVFNVVSDTFFLMDLVL). The Cytoplasmic portion of the chain corresponds to 262 to 288 (NFRTGIVIEDNTEIILDPEKIKKKYLR). A helical membrane pass occupies residues 289-309 (TWFVVDFVSSIPVDYIFLIVE). Residues 310 to 317 (KGIDSEVY) are Extracellular-facing. Residues 318-338 (KTARALRIVRFTKILSLLRLL) form a helical; Voltage-sensor membrane-spanning segment. Residues 339–369 (RLSRLIRYIHQWEEIFHMTYDLASAVMRICN) are Cytoplasmic-facing. Residues 370 to 390 (LISMMLLLCHWDGCLQFLVPM) traverse the membrane as a helical segment. The Extracellular segment spans residues 391 to 413 (LQDFPRNCWVSINGMVNHSWSEL). An N-linked (GlcNAc...) asparagine glycan is attached at asparagine 407. Positions 414–435 (YSFALFKAMSHMLCIGYGRQAP) form an intramembrane region, pore-forming. Residues 436–440 (ESMTD) are Extracellular-facing. The chain crosses the membrane as a helical span at residues 441–461 (IWLTMLSMIVGATCYAMFIGH). Over 462–889 (ATALIQSLDS…SARSRLSSNL (428 aa)) the chain is Cytoplasmic. 3',5'-cyclic AMP contacts are provided by methionine 599, glycine 608, glutamate 609, isoleucine 610, cysteine 611, arginine 618, threonine 619, and arginine 659. Serine 668 is subject to Phosphoserine; by PKG/PRKG2. Serine 754 bears the Phosphoserine mark. The interval 754 to 889 (SPRLVRRPPP…SARSRLSSNL (136 aa)) is disordered. Omega-N-methylarginine is present on arginine 756. Pro residues predominate over residues 760 to 784 (RPPPGPAPAAASPGPPPPASPPGAP). A phosphoserine mark is found at serine 771, serine 779, serine 786, serine 866, and serine 868. Residues 785-860 (ASPRAPRTSP…TPAARAAAPS (76 aa)) are compositionally biased toward low complexity.

The protein belongs to the potassium channel HCN family. In terms of assembly, homotetramer. The channel is composed of a homo- or heterotetrameric complex of pore-forming subunits. Heterotetramer with HCN1. Forms an obligate 4:4 complex with accessory subunit PEX5L. Interacts with KCNE2. Phosphorylation at Ser-668 by PRKG2 shifts the voltage-dependence to more negative voltages, hence counteracting the stimulatory effect of cGMP on gating. Post-translationally, S-palmitoylated. In terms of processing, N-glycosylated; required for cell surface trafficking of HCN2. In terms of tissue distribution, highly expressed throughout the brain. Detected at low levels in heart.

The protein resides in the cell membrane. The catalysed reaction is Na(+)(in) = Na(+)(out). The enzyme catalyses K(+)(in) = K(+)(out). It carries out the reaction NH4(+)(in) = NH4(+)(out). Its activity is regulated as follows. Activated by cAMP, and at 10-100 times higher concentrations, also by cGMP. cAMP binding causes a conformation change that leads to the assembly of an active tetramer and channel opening. Binding of cAMP removes a tonic inhibition conferred by cyclic nucleotide-binding domain (CNBD) on channel opening. Channel activity is modulated by intracellular chloride ions and pH; acidic pH shifts the activation to more negative voltages. Inhibited by extracellular cesium ions. Its function is as follows. Hyperpolarization-activated ion channel that is permeable to sodium and potassium ions. Displays lower selectivity for K(+) over Na(+) ions. Contributes to the native pacemaker currents in heart (If) and in neurons (Ih). Can also transport ammonium in the distal nephron. Involved in the initiation of neuropathic pain in sensory neurons. The polypeptide is Potassium/sodium hyperpolarization-activated cyclic nucleotide-gated channel 2 (Homo sapiens (Human)).